A 66-amino-acid polypeptide reads, in one-letter code: MPKQKTHSGLKKRIKITATGKLMRHQAYSNHLAASKTTKQNRQLSAETTVHATDAKRIKRLIANMK.

It belongs to the bacterial ribosomal protein bL35 family.

This is Large ribosomal subunit protein bL35 from Acholeplasma laidlawii (strain PG-8A).